Consider the following 216-residue polypeptide: Flagellin B3 (216 aa).

Residues 1–11 (MLLDYIKSRRG) constitute a propeptide that is removed on maturation.

This sequence belongs to the archaeal flagellin family.

The protein resides in the archaeal flagellum. In terms of biological role, flagellin is the subunit protein which polymerizes to form the filaments of archaeal flagella. This is Flagellin B3 (flaB3) from Methanocaldococcus jannaschii (strain ATCC 43067 / DSM 2661 / JAL-1 / JCM 10045 / NBRC 100440) (Methanococcus jannaschii).